Consider the following 236-residue polypeptide: UPF0257 lipoprotein YnfC (236 aa).

The first 16 residues, 1-16 (MKYKLLPCLLAILLTG), serve as a signal peptide directing secretion. Cys-17 carries the N-palmitoyl cysteine lipid modification. Residue Cys-17 is the site of S-diacylglycerol cysteine attachment.

The protein belongs to the UPF0257 family.

It localises to the cell membrane. This chain is UPF0257 lipoprotein YnfC, found in Escherichia coli O45:K1 (strain S88 / ExPEC).